We begin with the raw amino-acid sequence, 735 residues long: Ion-translocating oxidoreductase complex subunit C (735 aa).

4Fe-4S ferredoxin-type domains follow at residues 368-397 (MGAP…QQLY) and 407-436 (KATA…VQYF). Residues cysteine 377, cysteine 380, cysteine 383, cysteine 387, cysteine 416, cysteine 419, cysteine 422, and cysteine 426 each coordinate [4Fe-4S] cluster. Residues 562 to 713 (AIARAKARKQ…AEPADPRKAA (152 aa)) are disordered.

It belongs to the 4Fe4S bacterial-type ferredoxin family. RnfC subfamily. The complex is composed of six subunits: RsxA, RsxB, RsxC, RsxD, RsxE and RsxG. Requires [4Fe-4S] cluster as cofactor.

It is found in the cell inner membrane. Its function is as follows. Part of a membrane-bound complex that couples electron transfer with translocation of ions across the membrane. Required to maintain the reduced state of SoxR. The chain is Ion-translocating oxidoreductase complex subunit C from Salmonella newport (strain SL254).